Here is a 287-residue protein sequence, read N- to C-terminus: Large ribosomal subunit protein uL2 (287 aa).

A disordered region spans residues 221 to 287; sequence RGSVMNPCDH…SKRSRGGRDS (67 aa). The segment covering 258–287 has biased composition (basic residues); sequence KTRKRNKPSNKFVLRKRRKTSKRSRGGRDS.

The protein belongs to the universal ribosomal protein uL2 family. As to quaternary structure, part of the 50S ribosomal subunit. Forms a bridge to the 30S subunit in the 70S ribosome.

Its function is as follows. One of the primary rRNA binding proteins. Required for association of the 30S and 50S subunits to form the 70S ribosome, for tRNA binding and peptide bond formation. It has been suggested to have peptidyltransferase activity; this is somewhat controversial. Makes several contacts with the 16S rRNA in the 70S ribosome. The chain is Large ribosomal subunit protein uL2 from Synechococcus sp. (strain WH7803).